A 389-amino-acid polypeptide reads, in one-letter code: S-adenosylmethionine synthase (389 aa).

ATP is bound at residue His-15. Residue Asp-17 participates in Mg(2+) binding. Glu-43 lines the K(+) pocket. Residues Glu-56 and Gln-99 each contribute to the L-methionine site. The interval 99–109 (QSPDIAQGVNE) is flexible loop. Residues 166–168 (DAK), 234–235 (RF), Asp-243, 249–250 (RK), Ala-266, and Lys-270 contribute to the ATP site. Residue Asp-243 participates in L-methionine binding. Position 274 (Lys-274) interacts with L-methionine.

This sequence belongs to the AdoMet synthase family. Homotetramer; dimer of dimers. Mg(2+) is required as a cofactor. Requires K(+) as cofactor.

The protein resides in the cytoplasm. The enzyme catalyses L-methionine + ATP + H2O = S-adenosyl-L-methionine + phosphate + diphosphate. Its pathway is amino-acid biosynthesis; S-adenosyl-L-methionine biosynthesis; S-adenosyl-L-methionine from L-methionine: step 1/1. Its function is as follows. Catalyzes the formation of S-adenosylmethionine (AdoMet) from methionine and ATP. The overall synthetic reaction is composed of two sequential steps, AdoMet formation and the subsequent tripolyphosphate hydrolysis which occurs prior to release of AdoMet from the enzyme. This is S-adenosylmethionine synthase from Neisseria gonorrhoeae (strain ATCC 700825 / FA 1090).